Here is a 231-residue protein sequence, read N- to C-terminus: Ferredoxin-type protein NapG (231 aa).

Residues M1–A41 constitute a signal peptide (tat-type signal). 4Fe-4S ferredoxin-type domains lie at G50 to L81, T89 to E121, L130 to E166, and F177 to L208. The [4Fe-4S] cluster site is built by C61, C64, C67, C71, C99, C102, C107, C111, C139, C147, C150, C154, C186, C189, C192, and C196.

Requires [4Fe-4S] cluster as cofactor. Exported by the Tat system. The position of the signal peptide cleavage has not been experimentally proven.

It is found in the periplasm. Required for electron transfer from ubiquinol, via NapC, to the periplasmic nitrate reductase NapAB complex. This Escherichia coli (strain K12) protein is Ferredoxin-type protein NapG (napG).